The chain runs to 198 residues: Recombination protein RecR (198 aa).

The segment at 56-71 adopts a C4-type zinc-finger fold; the sequence is CKICHSLTENEICDIC. Residues 79 to 174 enclose the Toprim domain; the sequence is HLLCVVESPA…HMTRIAQGVP (96 aa).

Belongs to the RecR family.

May play a role in DNA repair. It seems to be involved in an RecBC-independent recombinational process of DNA repair. It may act with RecF and RecO. In Acinetobacter baylyi (strain ATCC 33305 / BD413 / ADP1), this protein is Recombination protein RecR.